We begin with the raw amino-acid sequence, 798 residues long: Phenylalanine--tRNA ligase beta subunit (798 aa).

The 110-residue stretch at Asn-39–Asn-148 folds into the tRNA-binding domain. The B5 domain maps to Ser-402–Leu-477. Residues Asp-455, Asp-461, and Asp-465 each coordinate Mg(2+). An FDX-ACB domain is found at Ser-704–Arg-797.

Belongs to the phenylalanyl-tRNA synthetase beta subunit family. Type 1 subfamily. As to quaternary structure, tetramer of two alpha and two beta subunits. Requires Mg(2+) as cofactor.

It is found in the cytoplasm. It catalyses the reaction tRNA(Phe) + L-phenylalanine + ATP = L-phenylalanyl-tRNA(Phe) + AMP + diphosphate + H(+). This chain is Phenylalanine--tRNA ligase beta subunit (pheT), found in Buchnera aphidicola subsp. Schizaphis graminum (strain Sg).